A 588-amino-acid chain; its full sequence is Aspartate--tRNA ligase (588 aa).

Glutamate 172 serves as a coordination point for L-aspartate. Residues glutamine 196–lysine 199 form an aspartate region. Residue arginine 218 coordinates L-aspartate. ATP contacts are provided by residues arginine 218–glutamate 220 and glutamine 227. Histidine 449 provides a ligand contact to L-aspartate. ATP is bound at residue glutamate 483. Arginine 490 contacts L-aspartate. Glycine 535–arginine 538 contributes to the ATP binding site.

The protein belongs to the class-II aminoacyl-tRNA synthetase family. Type 1 subfamily. Homodimer.

The protein resides in the cytoplasm. It catalyses the reaction tRNA(Asp) + L-aspartate + ATP = L-aspartyl-tRNA(Asp) + AMP + diphosphate. Its function is as follows. Catalyzes the attachment of L-aspartate to tRNA(Asp) in a two-step reaction: L-aspartate is first activated by ATP to form Asp-AMP and then transferred to the acceptor end of tRNA(Asp). This Histophilus somni (strain 2336) (Haemophilus somnus) protein is Aspartate--tRNA ligase.